Consider the following 252-residue polypeptide: MSDWNPSLYLHFAAERSRPAVELLARVPLENIEYIADLGCGPGNSTALLDQRWPAARITGIDSSPAMIAEARSALPDCLFVEADIRNWQPEQALDLIFANASLQWLPDHYELFPHLVSLLSPLGVLAVQMPDNWLEPTHVLMREVAWEQNYPDRGREPLAGVHAYYDILSEAGCEVDIWRTTYYHQMPSHQAIIDWVTATGLRPWLQDLTESEQQHFLTRYHQMLEEQYPLQENGQILLAFPRLFIVARRTE.

It belongs to the methyltransferase superfamily. Tam family.

It localises to the cytoplasm. The catalysed reaction is trans-aconitate + S-adenosyl-L-methionine = (E)-3-(methoxycarbonyl)pent-2-enedioate + S-adenosyl-L-homocysteine. Functionally, catalyzes the S-adenosylmethionine monomethyl esterification of trans-aconitate. The chain is Trans-aconitate 2-methyltransferase from Escherichia coli O6:K15:H31 (strain 536 / UPEC).